A 286-amino-acid chain; its full sequence is Shikimate dehydrogenase (NADP(+)) (286 aa).

Shikimate-binding positions include 25-27 and threonine 72; that span reads SLS. Lysine 76 serves as the catalytic Proton acceptor. Glutamate 88 is a binding site for NADP(+). Positions 97 and 113 each coordinate shikimate. NADP(+)-binding positions include 138–142, 162–167, and isoleucine 232; these read GSGGA and NRTIER. Residue tyrosine 234 coordinates shikimate. An NADP(+)-binding site is contributed by glycine 255.

Belongs to the shikimate dehydrogenase family. As to quaternary structure, homodimer.

It catalyses the reaction shikimate + NADP(+) = 3-dehydroshikimate + NADPH + H(+). Its pathway is metabolic intermediate biosynthesis; chorismate biosynthesis; chorismate from D-erythrose 4-phosphate and phosphoenolpyruvate: step 4/7. In terms of biological role, involved in the biosynthesis of the chorismate, which leads to the biosynthesis of aromatic amino acids. Catalyzes the reversible NADPH linked reduction of 3-dehydroshikimate (DHSA) to yield shikimate (SA). The polypeptide is Shikimate dehydrogenase (NADP(+)) (Magnetococcus marinus (strain ATCC BAA-1437 / JCM 17883 / MC-1)).